A 378-amino-acid polypeptide reads, in one-letter code: Cobalt-precorrin-5B C(1)-methyltransferase (378 aa).

Belongs to the CbiD family.

It carries out the reaction Co-precorrin-5B + S-adenosyl-L-methionine = Co-precorrin-6A + S-adenosyl-L-homocysteine. Its pathway is cofactor biosynthesis; adenosylcobalamin biosynthesis; cob(II)yrinate a,c-diamide from sirohydrochlorin (anaerobic route): step 6/10. Functionally, catalyzes the methylation of C-1 in cobalt-precorrin-5B to form cobalt-precorrin-6A. This Tolumonas auensis (strain DSM 9187 / NBRC 110442 / TA 4) protein is Cobalt-precorrin-5B C(1)-methyltransferase.